We begin with the raw amino-acid sequence, 330 residues long: Phospho-N-acetylmuramoyl-pentapeptide-transferase (330 aa).

9 consecutive transmembrane segments (helical) span residues 13 to 33 (VFVF…LIPM), 58 to 78 (PTMG…FYAG), 83 to 103 (ILPL…DDFI), 113 to 133 (LYWN…AVYL), 152 to 172 (VSLG…STNA), 179 to 199 (LDGL…IVAM), 209 to 229 (MFSA…AYPA), 231 to 250 (IFMG…AIAI), and 304 to 324 (VKVV…GFFA).

It belongs to the glycosyltransferase 4 family. MraY subfamily. Mg(2+) is required as a cofactor.

Its subcellular location is the cell membrane. It catalyses the reaction UDP-N-acetyl-alpha-D-muramoyl-L-alanyl-gamma-D-glutamyl-meso-2,6-diaminopimeloyl-D-alanyl-D-alanine + di-trans,octa-cis-undecaprenyl phosphate = di-trans,octa-cis-undecaprenyl diphospho-N-acetyl-alpha-D-muramoyl-L-alanyl-D-glutamyl-meso-2,6-diaminopimeloyl-D-alanyl-D-alanine + UMP. The protein operates within cell wall biogenesis; peptidoglycan biosynthesis. In terms of biological role, catalyzes the initial step of the lipid cycle reactions in the biosynthesis of the cell wall peptidoglycan: transfers peptidoglycan precursor phospho-MurNAc-pentapeptide from UDP-MurNAc-pentapeptide onto the lipid carrier undecaprenyl phosphate, yielding undecaprenyl-pyrophosphoryl-MurNAc-pentapeptide, known as lipid I. The protein is Phospho-N-acetylmuramoyl-pentapeptide-transferase of Acetivibrio thermocellus (strain ATCC 27405 / DSM 1237 / JCM 9322 / NBRC 103400 / NCIMB 10682 / NRRL B-4536 / VPI 7372) (Clostridium thermocellum).